A 229-amino-acid chain; its full sequence is Small ribosomal subunit protein uS2c (229 aa).

The protein belongs to the universal ribosomal protein uS2 family.

It localises to the plastid. The protein resides in the chloroplast. This chain is Small ribosomal subunit protein uS2c (rps2), found in Emiliania huxleyi (Coccolithophore).